Here is a 418-residue protein sequence, read N- to C-terminus: E3 ubiquitin-protein ligase pellino homolog 1 (418 aa).

Positions Ala13 to Asp200 constitute an FHA; atypical domain. A Phosphoserine modification is found at Ser121. A Phosphothreonine modification is found at Thr127. The interval Cys311–Ala399 is ring-like domain; necessary for ubiquitination of RIPK3.

It belongs to the pellino family. Interacts with MAP3K7. Upon IL1B treatment, forms a complex with TRAF6, IRAK1, IRAK4 and MYD88; this complex recruits MAP3K7/TAK1, TAB1 and TAB2 to mediate NF-kappa-B activation. Direct binding of SMAD6 to PELI1 prevents the complex formation and hence negatively regulates IL1R-TLR signaling and eventually NF-kappa-B-mediated gene expression. Interacts (via atypical FHA domain) with RIPK3. Binds preferentially to the 'Thr-182' phosphorylated form of RIPK3. Interacts with RIPK1. In terms of processing, phosphorylation by IRAK1 and IRAK4 enhances its E3 ligase activity. Phosphorylated by ATM in response to DNA damage, promoting localization to DNA double-strand breaks (DSBs) and ability to mediate 'Lys-63'-linked ubiquitination of NBN. Sumoylated.

Its subcellular location is the chromosome. It catalyses the reaction S-ubiquitinyl-[E2 ubiquitin-conjugating enzyme]-L-cysteine + [acceptor protein]-L-lysine = [E2 ubiquitin-conjugating enzyme]-L-cysteine + N(6)-ubiquitinyl-[acceptor protein]-L-lysine.. It participates in protein modification; protein ubiquitination. Functionally, E3 ubiquitin ligase catalyzing the covalent attachment of ubiquitin moieties onto substrate proteins. Involved in the TLR and IL-1 signaling pathways via interaction with the complex containing IRAK kinases and TRAF6. Acts as a positive regulator of inflammatory response in microglia through activation of NF-kappa-B and MAP kinase. Mediates 'Lys-63'-linked polyubiquitination of IRAK1 allowing subsequent NF-kappa-B activation. Conjugates 'Lys-63'-linked ubiquitin chains to the adapter protein ASC/PYCARD, which in turn is crucial for NLRP3 inflammasome activation. Mediates 'Lys-48'-linked polyubiquitination of RIPK3 leading to its subsequent proteasome-dependent degradation; preferentially recognizes and mediates the degradation of the 'Thr-182' phosphorylated form of RIPK3. Negatively regulates necroptosis by reducing RIPK3 expression. Mediates 'Lys-63'-linked ubiquitination of RIPK1. Following phosphorylation by ATM, catalyzes 'Lys-63'-linked ubiquitination of NBN, promoting DNA repair via homologous recombination. Negatively regulates activation of the metabolic mTORC1 signaling pathway by mediating 'Lys-63'-linked ubiquitination of mTORC1-inhibitory protein TSC1 and thereby promoting TSC1/TSC2 complex stability. The chain is E3 ubiquitin-protein ligase pellino homolog 1 (Peli1) from Mus musculus (Mouse).